Consider the following 260-residue polypeptide: Ribonuclease HII (260 aa).

In terms of domain architecture, RNase H type-2 spans 71–259 (ELVAGVDEVG…VHDAIVNKKN (189 aa)). Positions 77, 78, and 169 each coordinate a divalent metal cation.

It belongs to the RNase HII family. Mn(2+) serves as cofactor. Requires Mg(2+) as cofactor.

The protein localises to the cytoplasm. The enzyme catalyses Endonucleolytic cleavage to 5'-phosphomonoester.. Endonuclease that specifically degrades the RNA of RNA-DNA hybrids. The chain is Ribonuclease HII from Leuconostoc citreum (strain KM20).